The following is a 311-amino-acid chain: Geranylgeranyl transferase type-2 subunit alpha (311 aa).

Residues 12 to 43 (EKAKAQRLKELEKIESYNKLVKSFEELREKQN) adopt a coiled-coil conformation. 5 PFTA repeats span residues 49-82 (ISLS…TETK), 93-126 (NEMK…DNCD), 129-162 (REMK…NIKL), 164-197 (DELK…YKEP), and 206-239 (EEFE…KSIP).

Belongs to the protein prenyltransferase subunit alpha family. Heterodimer of an alpha and a beta subunit.

The catalysed reaction is geranylgeranyl diphosphate + L-cysteinyl-[protein] = S-geranylgeranyl-L-cysteinyl-[protein] + diphosphate. Its function is as follows. Catalyzes the transfer of a geranylgeranyl moiety from geranylgeranyl diphosphate to proteins with a C-terminal sequence motif -XCC or -XCXC, where both cysteines may become modified. The protein is Geranylgeranyl transferase type-2 subunit alpha (rabggta) of Dictyostelium discoideum (Social amoeba).